Consider the following 233-residue polypeptide: Large ribosomal subunit protein uL1 (233 aa).

It belongs to the universal ribosomal protein uL1 family. As to quaternary structure, part of the 50S ribosomal subunit.

In terms of biological role, binds directly to 23S rRNA. The L1 stalk is quite mobile in the ribosome, and is involved in E site tRNA release. Functionally, protein L1 is also a translational repressor protein, it controls the translation of the L11 operon by binding to its mRNA. This chain is Large ribosomal subunit protein uL1, found in Geotalea daltonii (strain DSM 22248 / JCM 15807 / FRC-32) (Geobacter daltonii).